Reading from the N-terminus, the 405-residue chain is Arginine biosynthesis bifunctional protein ArgJ (405 aa).

Positions 152, 178, 189, 276, 400, and 405 each coordinate substrate. Thr-189 acts as the Nucleophile in catalysis.

This sequence belongs to the ArgJ family. Heterotetramer of two alpha and two beta chains.

It localises to the cytoplasm. It catalyses the reaction N(2)-acetyl-L-ornithine + L-glutamate = N-acetyl-L-glutamate + L-ornithine. The enzyme catalyses L-glutamate + acetyl-CoA = N-acetyl-L-glutamate + CoA + H(+). Its pathway is amino-acid biosynthesis; L-arginine biosynthesis; L-ornithine and N-acetyl-L-glutamate from L-glutamate and N(2)-acetyl-L-ornithine (cyclic): step 1/1. It functions in the pathway amino-acid biosynthesis; L-arginine biosynthesis; N(2)-acetyl-L-ornithine from L-glutamate: step 1/4. In terms of biological role, catalyzes two activities which are involved in the cyclic version of arginine biosynthesis: the synthesis of N-acetylglutamate from glutamate and acetyl-CoA as the acetyl donor, and of ornithine by transacetylation between N(2)-acetylornithine and glutamate. The sequence is that of Arginine biosynthesis bifunctional protein ArgJ from Pseudomonas fluorescens (strain Pf0-1).